The chain runs to 243 residues: Probable phosphatase CLD_1129 (243 aa).

9 residues coordinate Zn(2+): H8, H10, H16, H41, E74, H102, H132, D192, and H194.

This sequence belongs to the PHP family. Zn(2+) is required as a cofactor.

This chain is Probable phosphatase CLD_1129, found in Clostridium botulinum (strain Okra / Type B1).